A 63-amino-acid polypeptide reads, in one-letter code: MRIHYLLFSFLLVLLSPLSAFTQSINNPITCLTKGGVCWGPCTGGFRQIGTCGLPRVRCCKKK.

The signal sequence occupies residues methionine 1–threonine 22. Glutamine 23 is modified (pyrrolidone carboxylic acid). Cystine bridges form between cysteine 31/cysteine 59, cysteine 38/cysteine 52, and cysteine 42/cysteine 60.

The protein belongs to the beta-defensin family. Highly expressed in lung.

Its subcellular location is the secreted. In terms of biological role, exhibits antimicrobial activity against Gram-negative bacteria and Gram-positive bacteria. May act as a ligand for C-C chemokine receptor CCR6. Binds to CCR6 and induces chemotactic activity of CCR6-expressing cells. The polypeptide is Beta-defensin 4 (Defb4) (Rattus norvegicus (Rat)).